We begin with the raw amino-acid sequence, 860 residues long: Pentatricopeptide repeat-containing protein At1g18900 (860 aa).

PPR repeat units lie at residues 363–397, 398–432, 433–467, 468–502, 503–537, 538–572, 573–607, and 608–642; these read DGHTYTTMVGNLGRAKQFGAINKLLDEMVRDGCQP, NTVTYNRLIHSYGRANYLNEAMNVFNQMQEAGCKP, DRVTYCTLIDIHAKAGFLDIAMDMYQRMQAGGLSP, DTFTYSVIINCLGKAGHLPAAHKLFCEMVDQGCTP, NLVTYNIMMDLHAKARNYQNALKLYRDMQNAGFEP, DKVTYSIVMEVLGHCGYLEEAEAVFTEMQQKNWIP, DEPVYGLLVDLWGKAGNVEKAWQWYQAMLHAGLRP, and NVPTCNSLLSTFLRVNKIAEAYELLQNMLALGLRP. One can recognise a Smr domain in the interval 760-843; that stretch reads INLHVMSEGT…NSGCFVGSGE (84 aa).

Belongs to the PPR family. P subfamily.

This chain is Pentatricopeptide repeat-containing protein At1g18900, found in Arabidopsis thaliana (Mouse-ear cress).